A 201-amino-acid polypeptide reads, in one-letter code: Proteinase inhibitor type-2 CEVI57 (201 aa).

An N-terminal signal peptide occupies residues 1–23 (MAVYKVSFLAHLLVLGMYLLVST). 3 consecutive repeat copies span residues 27-83 (ANAC…DPKN), 84-143 (PNIC…IEPK), and 144-199 (GCTK…QSIS). Cystine bridges form between Cys30/Cys118, Cys34/Cys114, Cys42/Cys124, Cys54/Cys91, Cys57/Cys75, Cys58/Cys87, Cys64/Cys100, and Cys117/Cys135.

Belongs to the protease inhibitor I20 (potato type II proteinase inhibitor) family.

In Solanum lycopersicum (Tomato), this protein is Proteinase inhibitor type-2 CEVI57 (CEVI57).